Consider the following 161-residue polypeptide: Small heat shock protein hspJ (161 aa).

The sHSP domain occupies Ser-52–Glu-161.

The protein belongs to the small heat shock protein (HSP20) family.

The chain is Small heat shock protein hspJ (hspJ) from Dictyostelium discoideum (Social amoeba).